Here is a 418-residue protein sequence, read N- to C-terminus: Nuclear hormone receptor 114 (418 aa).

A DNA-binding region (nuclear receptor) is located at residues D12–Q87. 2 NR C4-type zinc fingers span residues C15 to C35 and C51 to C70. Residues R89–P130 are disordered. The NR LBD domain occupies P170–D409. Residues F398–D409 are AF-2.

This sequence belongs to the nuclear hormone receptor family. As to expression, expressed in germ and intestinal cells and at low levels in the hypodermis.

The protein localises to the nucleus. Probable transcription factor which may have a role in detoxifying dietary metabolites arising from bacterial tryptophan metabolism. Required for fertility and involved in proper postembryonic germline development, especially germline stem cell (GSC) proliferation. Required for activation of the methionine/S-adenosylmethionine (Met/SAM) cycle in response to low levels of SAM. The chain is Nuclear hormone receptor 114 from Caenorhabditis elegans.